A 409-amino-acid polypeptide reads, in one-letter code: Homoserine O-succinyltransferase (409 aa).

Positions 43 to 380 (NAIVVCHALN…PHGHDAFLLD (338 aa)) constitute an AB hydrolase-1 domain. The active-site Nucleophile is the Ser149. Arg219 serves as a coordination point for substrate. The interval 244-268 (TLPAARGSLPPEGTDPTRGGPASDR) is disordered. Residues Asp341 and His374 contribute to the active site. Asp375 contacts substrate.

Belongs to the AB hydrolase superfamily. MetX family. Homodimer.

Its subcellular location is the cytoplasm. It carries out the reaction L-homoserine + succinyl-CoA = O-succinyl-L-homoserine + CoA. Its pathway is amino-acid biosynthesis; L-methionine biosynthesis via de novo pathway; O-succinyl-L-homoserine from L-homoserine: step 1/1. Functionally, transfers a succinyl group from succinyl-CoA to L-homoserine, forming succinyl-L-homoserine. This chain is Homoserine O-succinyltransferase, found in Comamonas testosteroni (strain DSM 14576 / KF-1) (Pseudomonas testosteroni).